Reading from the N-terminus, the 185-residue chain is HTH-type transcriptional regulator Hpr (185 aa).

Residues 13–157 (AMIFSQRIAQ…LIAILRNIYG (145 aa)) enclose the HTH marR-type domain. Positions 63–86 (ISEIAKFGVMHVSTAFNFSKKLEE) form a DNA-binding region, H-T-H motif.

As to quaternary structure, homodimer.

Negative regulator of protease production and sporulation. The sequence is that of HTH-type transcriptional regulator Hpr from Bacillus cytotoxicus (strain DSM 22905 / CIP 110041 / 391-98 / NVH 391-98).